An 80-amino-acid polypeptide reads, in one-letter code: Exodeoxyribonuclease 7 small subunit (80 aa).

It belongs to the XseB family. As to quaternary structure, heterooligomer composed of large and small subunits.

The protein resides in the cytoplasm. The enzyme catalyses Exonucleolytic cleavage in either 5'- to 3'- or 3'- to 5'-direction to yield nucleoside 5'-phosphates.. Functionally, bidirectionally degrades single-stranded DNA into large acid-insoluble oligonucleotides, which are then degraded further into small acid-soluble oligonucleotides. The chain is Exodeoxyribonuclease 7 small subunit from Klebsiella pneumoniae (strain 342).